A 308-amino-acid chain; its full sequence is Methionyl-tRNA formyltransferase (308 aa).

111–114 (SLLP) contacts (6S)-5,6,7,8-tetrahydrofolate.

It belongs to the Fmt family.

The enzyme catalyses L-methionyl-tRNA(fMet) + (6R)-10-formyltetrahydrofolate = N-formyl-L-methionyl-tRNA(fMet) + (6S)-5,6,7,8-tetrahydrofolate + H(+). Functionally, attaches a formyl group to the free amino group of methionyl-tRNA(fMet). The formyl group appears to play a dual role in the initiator identity of N-formylmethionyl-tRNA by promoting its recognition by IF2 and preventing the misappropriation of this tRNA by the elongation apparatus. The protein is Methionyl-tRNA formyltransferase of Thermodesulfovibrio yellowstonii (strain ATCC 51303 / DSM 11347 / YP87).